Reading from the N-terminus, the 267-residue chain is Nus factor SuhB (267 aa).

Residues Glu-67, Asp-84, and Leu-86 each coordinate Mg(2+). Residue Glu-67 coordinates substrate. Residues 86 to 89, Arg-183, and Asp-212 each bind substrate; that span reads LDGT.

It belongs to the inositol monophosphatase superfamily. As to quaternary structure, homodimer. The rRNA transcription and antitermination complex (rrnTAC) consists of RNA polymerase (RNAP), NusA, NusB, NusE (rpsJ), NusG, SubB, ribosomal protein S4, DNA and precursor rRNA; S4 is more flexible than other subunits. Requires Mg(2+) as cofactor.

It is found in the cytoplasm. The catalysed reaction is a myo-inositol phosphate + H2O = myo-inositol + phosphate. In terms of biological role, part of the processive rRNA transcription and antitermination complex (rrnTAC). The complex forms an RNA-chaperone ring around the RNA exit tunnel of RNA polymerase (RNAP). It supports rapid transcription and antitermination of rRNA operons, cotranscriptional rRNA folding, and annealing of distal rRNA regions to allow correct ribosome biogenesis. This subunit may play a central role in organizing the structure. This Vibrio cholerae serotype O1 (strain ATCC 39315 / El Tor Inaba N16961) protein is Nus factor SuhB.